Reading from the N-terminus, the 466-residue chain is Cysteine--tRNA ligase (466 aa).

Cys29 lines the Zn(2+) pocket. The short motif at 31–41 (ATVQAAPHIGH) is the 'HIGH' region element. Positions 208, 233, and 237 each coordinate Zn(2+). The 'KMSKS' region motif lies at 264-268 (KMSKS). Lys267 contacts ATP.

This sequence belongs to the class-I aminoacyl-tRNA synthetase family. As to quaternary structure, monomer. It depends on Zn(2+) as a cofactor.

It is found in the cytoplasm. The enzyme catalyses tRNA(Cys) + L-cysteine + ATP = L-cysteinyl-tRNA(Cys) + AMP + diphosphate. This Streptomyces avermitilis (strain ATCC 31267 / DSM 46492 / JCM 5070 / NBRC 14893 / NCIMB 12804 / NRRL 8165 / MA-4680) protein is Cysteine--tRNA ligase.